A 178-amino-acid polypeptide reads, in one-letter code: Large ribosomal subunit protein uL6 (178 aa).

It belongs to the universal ribosomal protein uL6 family. In terms of assembly, part of the 50S ribosomal subunit.

Functionally, this protein binds to the 23S rRNA, and is important in its secondary structure. It is located near the subunit interface in the base of the L7/L12 stalk, and near the tRNA binding site of the peptidyltransferase center. The chain is Large ribosomal subunit protein uL6 from Bacillus licheniformis (strain ATCC 14580 / DSM 13 / JCM 2505 / CCUG 7422 / NBRC 12200 / NCIMB 9375 / NCTC 10341 / NRRL NRS-1264 / Gibson 46).